The chain runs to 968 residues: RNA polymerase-associated protein RapA (968 aa).

The 171-residue stretch at 164-334 folds into the Helicase ATP-binding domain; the sequence is DVGRRHAPRV…FARLRLLDPD (171 aa). ATP is bound at residue 177–184; it reads DEVGLGKT. The DEAH box motif lies at 280–283; the sequence is DEAH. A Helicase C-terminal domain is found at 490–643; the sequence is RVEWLMGYLT…HTCPTGRAVY (154 aa).

This sequence belongs to the SNF2/RAD54 helicase family. RapA subfamily. As to quaternary structure, interacts with the RNAP. Has a higher affinity for the core RNAP than for the holoenzyme. Its ATPase activity is stimulated by binding to RNAP.

Its function is as follows. Transcription regulator that activates transcription by stimulating RNA polymerase (RNAP) recycling in case of stress conditions such as supercoiled DNA or high salt concentrations. Probably acts by releasing the RNAP, when it is trapped or immobilized on tightly supercoiled DNA. Does not activate transcription on linear DNA. Probably not involved in DNA repair. The protein is RNA polymerase-associated protein RapA of Erwinia tasmaniensis (strain DSM 17950 / CFBP 7177 / CIP 109463 / NCPPB 4357 / Et1/99).